We begin with the raw amino-acid sequence, 258 residues long: 5'-nucleotidase SurE (258 aa).

The a divalent metal cation site is built by aspartate 16, aspartate 17, serine 47, and asparagine 99.

The protein belongs to the SurE nucleotidase family. It depends on a divalent metal cation as a cofactor.

It localises to the cytoplasm. The enzyme catalyses a ribonucleoside 5'-phosphate + H2O = a ribonucleoside + phosphate. Functionally, nucleotidase that shows phosphatase activity on nucleoside 5'-monophosphates. The sequence is that of 5'-nucleotidase SurE from Coxiella burnetii (strain CbuK_Q154) (Coxiella burnetii (strain Q154)).